Consider the following 112-residue polypeptide: uncharacterized protein (112 aa).

This sequence to Buchnera BU585.

This is an uncharacterized protein from Buchnera aphidicola subsp. Schizaphis graminum (strain Sg).